The primary structure comprises 2197 residues: RNA1 polyprotein (2197 aa).

The Cytoplasmic portion of the chain corresponds to 621–1167 (GLTDVFGVPL…YDWVYANGGK (547 aa)). One can recognise an SF3 helicase domain in the interval 766–933 (VKRLSDLHKR…EGVAYNPSDP (168 aa)). An ATP-binding site is contributed by 796 to 803 (GGPRCGKS). The helical transmembrane segment at 1168–1188 (LLLVLAAVILILFFGSACIKL) threads the bilayer. Residues 1189-1212 (MQAIFCGAAGGTVSMAAVGKMTVQ) are Lumenal-facing. Residue asparagine 1228 is glycosylated (N-linked (GlcNAc...) asparagine; by host). The Peptidase C3 domain occupies 1243-1475 (LAEAQFNESH…MPRYISHASF (233 aa)). Residues histidine 1283, glutamate 1331, and cysteine 1433 each act as for picornain 3C-like protease activity in the active site. One can recognise a RdRp catalytic domain in the interval 1765–1888 (SVALNCDYSR…SIKPDTMKYF (124 aa)).

The protein belongs to the nepoviruses RNA1 polyprotein family. Post-translationally, specific enzymatic cleavages by picornain 3C-like protease in vivo yield mature proteins. Picornain 3C-like protease is autocatalytically processed. NTB exists as NTB-VPg polyprotein as well as NTB mature protein. VPg is uridylylated by the polymerase and is covalently linked to the 5'-end of genomic RNA. This uridylylated form acts as a nucleotide-peptide primer for the polymerase.

The protein localises to the host endoplasmic reticulum lumen. It localises to the host endoplasmic reticulum membrane. The enzyme catalyses RNA(n) + a ribonucleoside 5'-triphosphate = RNA(n+1) + diphosphate. Picornain 3C-like protease is a thiol protease that cleaves at Gln-|-Gly or Gln-|-Ser sites in the P1 and P2 polyproteins. Its function is as follows. The VPg-NTB polyprotein may act as a membrane-anchor for the replication complex. The polypeptide is RNA1 polyprotein (Tomato ringspot virus (isolate raspberry) (ToRSV)).